The primary structure comprises 253 residues: Triosephosphate isomerase (253 aa).

9–11 provides a ligand contact to substrate; the sequence is NWK. Residue His-97 is the Electrophile of the active site. The active-site Proton acceptor is Glu-169. Residues Gly-175, Ser-215, and 236 to 237 each bind substrate; that span reads GG.

Belongs to the triosephosphate isomerase family. As to quaternary structure, homodimer.

Its subcellular location is the cytoplasm. The enzyme catalyses D-glyceraldehyde 3-phosphate = dihydroxyacetone phosphate. Its pathway is carbohydrate biosynthesis; gluconeogenesis. It participates in carbohydrate degradation; glycolysis; D-glyceraldehyde 3-phosphate from glycerone phosphate: step 1/1. Functionally, involved in the gluconeogenesis. Catalyzes stereospecifically the conversion of dihydroxyacetone phosphate (DHAP) to D-glyceraldehyde-3-phosphate (G3P). The protein is Triosephosphate isomerase of Staphylococcus aureus (strain NCTC 8325 / PS 47).